The sequence spans 689 residues: Long-chain-fatty-acid--CoA ligase 2 (689 aa).

252–263 (YTSGSTGKPKGV) provides a ligand contact to ATP. Residues 518–567 (DGWFKTGDVGEIAKGNTLRLIDRKKNIVKSLNGEYIALEKIEAQFFTSPL) carry the FACS motif.

The protein belongs to the ATP-dependent AMP-binding enzyme family. Requires Mg(2+) as cofactor.

Its subcellular location is the golgi apparatus. It localises to the vacuole membrane. It catalyses the reaction a long-chain fatty acid + ATP + CoA = a long-chain fatty acyl-CoA + AMP + diphosphate. In terms of biological role, esterification, concomitant with transport, of endogenous long-chain fatty acids into metabolically active CoA thioesters for subsequent degradation or incorporation into phospholipids. Plays an important role in the determination of viability in the stationary phase. This chain is Long-chain-fatty-acid--CoA ligase 2 (lcf2), found in Schizosaccharomyces pombe (strain 972 / ATCC 24843) (Fission yeast).